The chain runs to 794 residues: FT-interacting protein 1 (794 aa).

Positions 1-27 (MAAKDGAKSQEDYKLKDMKPELGERWP) are enriched in basic and acidic residues. The segment at 1–34 (MAAKDGAKSQEDYKLKDMKPELGERWPHGGQRGG) is disordered. 3 consecutive C2 domains span residues 37-158 (WIGS…PQWY), 198-321 (VQGE…SKWY), and 364-492 (YISD…THSY). Ca(2+) contacts are provided by D76, D123, E125, and E131. 4 consecutive transmembrane segments (helical) span residues 510–532 (LAVRFTCLSLAHMIYLYGHPLLP), 595–615 (IVSVFAGLIAMSKWLGDVCYW), 619–639 (LTTILFHVLFFILICYPELIL), and 737–757 (LFVIFCLVAAMILYVTPFKII).

It belongs to the MCTP family. Interacts with FT in phloem companion cells. It depends on Ca(2+) as a cofactor. As to expression, expressed in the vascular tissues of roots, cotyledons and rosette leaves. Specifically located in the phloem including companion cells. Observed in flowers. Not detected in the shoot apical meristem.

It is found in the endoplasmic reticulum membrane. Its subcellular location is the cell junction. The protein localises to the plasmodesma. Functionally, involved in the export of FT from the phloem companion cells to the sieve elements through the plasmodesmata. Regulates flowering time under long days. May function as a signaling molecule by regulating the trafficking of other regulators. This Arabidopsis thaliana (Mouse-ear cress) protein is FT-interacting protein 1.